A 171-amino-acid polypeptide reads, in one-letter code: MTTASPSQVRQNYHQDSEAAINRQINLELYASYVYLSMSYYFDRDDVALKNFAKYFLHQSHEEREHAERLMKLQNQRGARIFLQDIKKPDRDDWENGLNAMECALCLERSVNQSLLELHKLATEKNDPHLCDFIETHYLNEQVEAIKELGDHITNLRKMGALWIGHGRVPL.

Methionine 1 carries the N-acetylmethionine modification. N-acetylthreonine; in Ferritin heavy chain, N-terminally processed is present on threonine 2. Residues 11-160 enclose the Ferritin-like diiron domain; the sequence is QNYHQDSEAA…DHITNLRKMG (150 aa). Glutamate 28, glutamate 63, histidine 66, glutamate 108, and glutamine 142 together coordinate Fe cation.

The protein belongs to the ferritin family. Oligomer of 24 subunits. There are two types of subunits: L (light) chain and H (heavy) chain. The major chain can be light or heavy, depending on the species and tissue type. The functional molecule forms a roughly spherical shell with a diameter of 12 nm and contains a central cavity into which the insoluble mineral iron core is deposited. Interacts with NCOA4; NCOA4 promotes targeting of the iron-binding ferritin complex to autolysosomes following starvation or iron depletion.

It localises to the cytoplasm. The protein localises to the lysosome. Its subcellular location is the cytoplasmic vesicle. It is found in the autophagosome. The catalysed reaction is 4 Fe(2+) + O2 + 4 H(+) = 4 Fe(3+) + 2 H2O. Its function is as follows. Stores iron in a soluble, non-toxic, readily available form. Important for iron homeostasis. Has ferroxidase activity. Iron is taken up in the ferrous form and deposited as ferric hydroxides after oxidation. Also plays a role in delivery of iron to cells. Mediates iron uptake in capsule cells of the developing kidney. Delivery to lysosomes is mediated by the cargo receptor NCOA4 for autophagic degradation and release of iron. This chain is Ferritin heavy chain (FTH1), found in Ovis aries (Sheep).